A 691-amino-acid chain; its full sequence is Menaquinone reductase, molybdopterin-binding-like subunit (691 aa).

Positions 1–27 form a signal peptide, tat-type signal; that stretch reads MALDRRGFLKFIGGATAGILATPVVWK. The region spanning 50-106 is the 4Fe-4S Mo/W bis-MGD-type domain; it reads NSYVPTVSKLCPTGIGVRVRLVDGRPVRVIGNPEHPLSKGGVSSIAAAEVQMLYSPA.

This sequence belongs to the prokaryotic molybdopterin-containing oxidoreductase family. The Qrc complex is composed of four subunits: QrcA, QrcB, QrcC and QrcD. Can form a supercomplex with the [NiFe] hydrogenase HynA1 and the tetraheme Type I cytochrome c3 TpIc(3), its physiological electron donors. The cofactor is There is no molybdenum or tungsten pterin cofactor present in the Qrc complex, despite the similarity of QrcB to molybdopterin-containing oxidoreductases.. Predicted to be exported by the Tat system. The position of the signal peptide cleavage has not been experimentally proven.

The protein localises to the periplasm. Its function is as follows. Component of the respiratory Qrc complex, that catalyzes the reduction of the menaquinone pool using electrons transferred from the reduced periplasmic cytochrome c3, and which is probably involved in sulfate respiration. Is likely essential for growth on H(2) or formate since the periplasmic hydrogenases and/or formate dehydrogenases act as primary electron donors for the Qrc complex. The function of the QrcB subunit is unknown; in the absence of a catalytic site, it may provide a structural scaffold for the other subunits. In Nitratidesulfovibrio vulgaris (strain ATCC 29579 / DSM 644 / CCUG 34227 / NCIMB 8303 / VKM B-1760 / Hildenborough) (Desulfovibrio vulgaris), this protein is Menaquinone reductase, molybdopterin-binding-like subunit.